A 420-amino-acid polypeptide reads, in one-letter code: Gamma-glutamyl phosphate reductase (420 aa).

This sequence belongs to the gamma-glutamyl phosphate reductase family.

Its subcellular location is the cytoplasm. It catalyses the reaction L-glutamate 5-semialdehyde + phosphate + NADP(+) = L-glutamyl 5-phosphate + NADPH + H(+). It participates in amino-acid biosynthesis; L-proline biosynthesis; L-glutamate 5-semialdehyde from L-glutamate: step 2/2. Catalyzes the NADPH-dependent reduction of L-glutamate 5-phosphate into L-glutamate 5-semialdehyde and phosphate. The product spontaneously undergoes cyclization to form 1-pyrroline-5-carboxylate. The chain is Gamma-glutamyl phosphate reductase from Neisseria meningitidis serogroup A / serotype 4A (strain DSM 15465 / Z2491).